The following is a 709-amino-acid chain: Elongation factor G (709 aa).

The 283-residue stretch at 8 to 290 folds into the tr-type G domain; the sequence is NRYRNIGISA…AVIQYMPAPQ (283 aa). GTP is bound by residues 17 to 24, 88 to 92, and 142 to 145; these read AHIDAGKT, DTPGH, and NKMD.

Belongs to the TRAFAC class translation factor GTPase superfamily. Classic translation factor GTPase family. EF-G/EF-2 subfamily.

Its subcellular location is the cytoplasm. Its function is as follows. Catalyzes the GTP-dependent ribosomal translocation step during translation elongation. During this step, the ribosome changes from the pre-translocational (PRE) to the post-translocational (POST) state as the newly formed A-site-bound peptidyl-tRNA and P-site-bound deacylated tRNA move to the P and E sites, respectively. Catalyzes the coordinated movement of the two tRNA molecules, the mRNA and conformational changes in the ribosome. This is Elongation factor G from Psychrobacter sp. (strain PRwf-1).